Reading from the N-terminus, the 341-residue chain is MTGSNMSECLADAMCQRCQARFAPTERIVNSNGELYHEHCFVCAQCFRPFPEGLFYEFEGRKYCEHDFQMLFAPCCGFCGEFVIGRVIKAMNANWHPGCFRCELCDVELADLGFVKNAGRHLCRPCHNREKAKGLGKFICQRCHLAIDEQPLMFKNDPYHPDHFSCSNCGKELTSDARELKGELYCLPCHDKMGIPICGACRRPIEGRVVNALGKQWHVEHFVCAKCEKPFLGHRHYEKKGLAYCETHYNQLFGDVCYNCSHVIEGDVVSALSKAWCVNCFSCSTCNMKLTLKNKFVEFDMKPVCKRCYERFPLELKKRLKKLSDLSSRKAQPKSVDVNSL.

LIM zinc-binding domains lie at 13–74, 76–133, 138–195, 196–255, and 256–315; these read AMCQ…LFAP, CGFC…EKAK, FICQ…KMGI, PICG…LFGD, and VCYN…FPLE. A Phosphoserine modification is found at Ser328.

In terms of assembly, interacts with integrin-linked protein kinase 1 (ILK) via the first LIM domain, and in competition with LIMS1. Part of the heterotrimeric IPP complex composed of integrin-linked kinase (ILK), LIMS1 or LIMS2, and PARVA. Interacts with TGFB1I1. In terms of tissue distribution, detected in heart, lung, kidney, liver, urinary bladder, fat, skin, skeletal muscle, uterus, large intestine and testis.

The protein localises to the cell junction. It is found in the focal adhesion. The protein resides in the cell membrane. In terms of biological role, adapter protein in a cytoplasmic complex linking beta-integrins to the actin cytoskeleton, bridges the complex to cell surface receptor tyrosine kinases and growth factor receptors. This Mus musculus (Mouse) protein is LIM and senescent cell antigen-like-containing domain protein 2 (Lims2).